The following is a 146-amino-acid chain: Ribosome maturation factor RimP (146 aa).

The protein belongs to the RimP family.

The protein resides in the cytoplasm. Functionally, required for maturation of 30S ribosomal subunits. This Helicobacter pylori (strain G27) protein is Ribosome maturation factor RimP.